A 1103-amino-acid polypeptide reads, in one-letter code: Retinal guanylyl cyclase 1 (1103 aa).

An N-terminal signal peptide occupies residues 1-51; that stretch reads MTACARRAGGLPDPGLCGPAWWAPSLPRLPRALPRLPLLLLLLLLQPPALS. Residues 52–462 are Extracellular-facing; it reads AVFTVGVLGP…PNNICGGGLE (411 aa). N-linked (GlcNAc...) asparagine glycosylation is present at Asn-297. A helical transmembrane segment spans residues 463 to 487; it reads PGLVFLGFLLVVGMGLAGAFLAHYV. The Cytoplasmic segment spans residues 488 to 1103; sequence RHRLLHMQMV…LEKARPGQFS (616 aa). The 284-residue stretch at 525–808 folds into the Protein kinase domain; that stretch reads QGSRSSLGAR…DHTFDLFKNI (284 aa). The Guanylate cyclase domain maps to 880–1010; the sequence is TLYFSDIVGF…DTVNTASRME (131 aa). The tract at residues 1065 to 1103 is disordered; the sequence is PIPKPPDLQPGSSNHGISLQEIPPERRRKLEKARPGQFS.

The protein belongs to the adenylyl cyclase class-4/guanylyl cyclase family. Homodimer; requires homodimerization for guanylyl cyclase activity. Interacts with RD3; promotes the exit of GUCY2D from the endoplasmic reticulum and its trafficking to the photoreceptor outer segments. Interaction with RD3 negatively regulates guanylate cyclase activity. As to expression, retina.

Its subcellular location is the photoreceptor outer segment membrane. The protein localises to the endoplasmic reticulum membrane. It catalyses the reaction GTP = 3',5'-cyclic GMP + diphosphate. With respect to regulation, activated by GUCA1A when free calcium ions concentration is low, and inhibited by GUCA1A when free calcium ions concentration is high. Negatively regulated by RD3; inhibits the basal and GUCA1A-stimulated guanylate cyclase activity. Catalyzes the synthesis of cyclic GMP (cGMP) in rods and cones of photoreceptors. Plays an essential role in phototransduction, by mediating cGMP replenishment. May also participate in the trafficking of membrane-asociated proteins to the photoreceptor outer segment membrane. The sequence is that of Retinal guanylyl cyclase 1 (GUCY2D) from Homo sapiens (Human).